The sequence spans 250 residues: Cruxrhodopsin-3 (250 aa).

Over 1-9 (MPAPEGEAI) the chain is Extracellular. A helical transmembrane segment spans residues 10-27 (WLWLGTAGMFLGMLYFIA). At 28–41 (RGWGETDSRRQKFY) the chain is on the cytoplasmic side. The helical transmembrane segment at 42 to 60 (IATILITAIAFVNYLAMAL) threads the bilayer. Over 61 to 77 (GFGLTIVEIAGEQRPIY) the chain is Extracellular. The helical transmembrane segment at 78-94 (WARYSDWLFTTPLLLYD) threads the bilayer. Over 95-105 (LGLLAGADRNT) the chain is Cytoplasmic. A helical membrane pass occupies residues 106-125 (ISSLVSLDVLMIGTGLVATL). The Extracellular portion of the chain corresponds to 126 to 138 (SAGSGVLSAGAER). The helical transmembrane segment at 139–158 (LVWWGISTAFLLVLLYFLFS) threads the bilayer. Over 159 to 176 (SLSGRVADLPSDTRSTFK) the chain is Cytoplasmic. A helical transmembrane segment spans residues 177–195 (TLRNLVTVVWLVYPVWWLV). Residues 196–207 (GTEGIGLVGIGI) are Extracellular-facing. Residues 208–227 (ETAGFMVIDLVAKVGFGIIL) form a helical membrane-spanning segment. Residue K220 is modified to N6-(retinylidene)lysine. Residues 228–250 (LRSHGVLDGAAETTGAGATATAD) are Cytoplasmic-facing.

The protein belongs to the archaeal/bacterial/fungal opsin family. As to quaternary structure, homotrimer. Binds bacterioruberin in the crevice between neighboring subunits.

It is found in the cell membrane. Light-driven proton pump. The protein is Cruxrhodopsin-3 (cop3) of Haloarcula vallismortis (Halobacterium vallismortis).